The primary structure comprises 568 residues: Proline--tRNA ligase (568 aa).

The protein belongs to the class-II aminoacyl-tRNA synthetase family. ProS type 1 subfamily. Homodimer.

The protein resides in the cytoplasm. The enzyme catalyses tRNA(Pro) + L-proline + ATP = L-prolyl-tRNA(Pro) + AMP + diphosphate. In terms of biological role, catalyzes the attachment of proline to tRNA(Pro) in a two-step reaction: proline is first activated by ATP to form Pro-AMP and then transferred to the acceptor end of tRNA(Pro). As ProRS can inadvertently accommodate and process non-cognate amino acids such as alanine and cysteine, to avoid such errors it has two additional distinct editing activities against alanine. One activity is designated as 'pretransfer' editing and involves the tRNA(Pro)-independent hydrolysis of activated Ala-AMP. The other activity is designated 'posttransfer' editing and involves deacylation of mischarged Ala-tRNA(Pro). The misacylated Cys-tRNA(Pro) is not edited by ProRS. The protein is Proline--tRNA ligase of Chromobacterium violaceum (strain ATCC 12472 / DSM 30191 / JCM 1249 / CCUG 213 / NBRC 12614 / NCIMB 9131 / NCTC 9757 / MK).